The sequence spans 194 residues: NADPH-flavin oxidoreductase (194 aa).

This sequence belongs to the non-flavoprotein flavin reductase family. As to quaternary structure, homodimer. It can form an isobutylamine N-hydroxylase two component enzyme system formed of a flavin reductase component (VlmR) and a monooxygenase component (VlmH).

It catalyses the reaction FADH2 + NADP(+) = FAD + NADPH + 2 H(+). It carries out the reaction FMNH2 + NADP(+) = FMN + NADPH + 2 H(+). In terms of biological role, involved in the biosynthesis of the azoxy antibiotic valanimycin, which has an antitumor activity. Catalyzes the reduction of FAD/FMN to FADH(2)/FMNH(2) which are subsequently used for the hydroxylation of isobutylamine by the isobutylamine N-hydroxylase VlmH. It can reduce either FAD or flavin mononucleotide (FMN) but prefers FAD. The enzyme has a strong preference for NADPH as acceptor. The sequence is that of NADPH-flavin oxidoreductase from Streptomyces viridifaciens.